Reading from the N-terminus, the 350-residue chain is Mannonate dehydratase (350 aa).

This sequence belongs to the mannonate dehydratase family. It depends on Fe(2+) as a cofactor. Mn(2+) is required as a cofactor.

It carries out the reaction D-mannonate = 2-dehydro-3-deoxy-D-gluconate + H2O. Its pathway is carbohydrate metabolism; pentose and glucuronate interconversion. Its function is as follows. Catalyzes the dehydration of D-mannonate. In Clostridium perfringens (strain 13 / Type A), this protein is Mannonate dehydratase.